Consider the following 136-residue polypeptide: Small ribosomal subunit protein bS6 (136 aa).

Basic and acidic residues predominate over residues 117 to 130 (EERSRSSRRQREDV). Positions 117 to 136 (EERSRSSRRQREDVIEGVEL) are disordered.

It belongs to the bacterial ribosomal protein bS6 family.

Binds together with bS18 to 16S ribosomal RNA. This is Small ribosomal subunit protein bS6 from Bartonella quintana (strain Toulouse) (Rochalimaea quintana).